The following is a 452-amino-acid chain: MNKILIAAASSGTGKTTITLGIMHALKKRGLRVQPFKVGPDYIDTNYHQAITGVASINLDSFLIDDDAMLATLFQKHGESADISVIEGVMGLFDGLGIDRDNSSTSFIAKCTKTPVILVVDGKAISTSAAAIVDGFNRFDPELTIAGVIINRVASENHFSLIKGAIERYTDVPVLGYLPKNAAVALPERHLGLVPKEEMTELETKWELLGDLIAEHVDLDRLLAISKTGAKLTVHPPEIQVPDFSGVRVAYALDAAFHFYYQDNLDFIRSTGATLIPFSPLEEREVPDADFIYIGGGFPEVFAEQLAKNKSMRESILAAHEQGKPIYAECGGLMYLGSSLEMEAESYEMVGVFDGVSKMTTRLRKFGYCIAEPLEDTLLGKKGTAIRGHEFHHSVFETTEPTRMKLTKKRDGKIVKEWHGGYQKGNTFASYLHIHFYQNLLIITHMFGAIER.

One can recognise a GATase cobBQ-type domain in the interval 248 to 441; the sequence is RVAYALDAAF…LHIHFYQNLL (194 aa). The active-site Nucleophile is cysteine 330.

This sequence belongs to the CobB/CbiA family. It depends on Mg(2+) as a cofactor.

The catalysed reaction is cob(II)yrinate + 2 L-glutamine + 2 ATP + 2 H2O = cob(II)yrinate a,c diamide + 2 L-glutamate + 2 ADP + 2 phosphate + 2 H(+). Its pathway is cofactor biosynthesis; adenosylcobalamin biosynthesis; cob(II)yrinate a,c-diamide from sirohydrochlorin (anaerobic route): step 10/10. Functionally, catalyzes the ATP-dependent amidation of the two carboxylate groups at positions a and c of cobyrinate, using either L-glutamine or ammonia as the nitrogen source. The polypeptide is Cobyrinate a,c-diamide synthase (Listeria monocytogenes serotype 4b (strain F2365)).